The sequence spans 191 residues: Guanylate kinase (191 aa).

Residues 9–187 (GQLIVITGPS…SLIALETAIF (179 aa)) form the Guanylate kinase-like domain. Residue 16-23 (GPSGVGKG) coordinates ATP.

Belongs to the guanylate kinase family.

Its subcellular location is the cytoplasm. The catalysed reaction is GMP + ATP = GDP + ADP. Its function is as follows. Essential for recycling GMP and indirectly, cGMP. This chain is Guanylate kinase, found in Thermosynechococcus vestitus (strain NIES-2133 / IAM M-273 / BP-1).